The primary structure comprises 1150 residues: Solute carrier family 12 member 6 (1150 aa).

Residues 1 to 135 (MHPPETTTKM…DEYFDKNLAL (135 aa)) are Cytoplasmic-facing. Residues 20 to 66 (TKIDDIPGLSDTSPDLSSRSSSRVRFSSRESVPETSRSEPMSEMSGA) are disordered. The span at 28–45 (LSDTSPDLSSRSSSRVRF) shows a compositional bias: low complexity. Ser32 and Ser120 each carry phosphoserine. Residues 136–158 (FEEEMDTRPKVSSLLNRMANYTN) traverse the membrane as a discontinuously helical segment. K(+)-binding residues include Ser147 and Ser148. Ser148 carries the post-translational modification Phosphoserine. Asn151 is a binding site for chloride. Residues 159–165 (LTQGAKE) are Extracellular-facing. The disordered stretch occupies residues 161–181 (QGAKEHEEAENITEGKKKPTK). Residues 163–177 (AKEHEEAENITEGKK) show a composition bias toward basic and acidic residues. A helical transmembrane segment spans residues 166 to 188 (HEEAENITEGKKKPTKTPQMGTF). Over 189–211 (MGVYLPCLQNIFGVILFLRLTWV) the chain is Cytoplasmic. A helical membrane pass occupies residues 212-245 (VGTAGVLQAFAIVLICCCCTMLTAISMSAIATNG). The Extracellular segment spans residues 246–263 (VVPAGGSYFMISRALGPE). The next 2 membrane-spanning stretches (helical) occupy residues 264 to 287 (FGGAVGLCFYLGTTFAAAMYILGA) and 288 to 316 (IEIFLVYIVPRAAIFHSDDALKESAAMLN). At 317–433 (NMRVYGTAFL…FVHNNVTSIQ (117 aa)) the chain is on the extracellular side. Cysteines 375 and 390 form a disulfide. N-linked (GlcNAc...) asparagine glycosylation is found at Asn379, Asn398, Asn411, and Asn428. Cys410 and Cys420 are joined by a disulfide. Residues 434-454 (GIPGLASGIITENLWSNYLPK) traverse the membrane as a helical segment. Residues Ile443, Thr444, and Asn446 each contribute to the K(+) site. Ile443 and Thr444 together coordinate chloride. 2 residues coordinate chloride: Leu447 and Trp448. Over 455 to 464 (GEIIEKPSAK) the chain is Cytoplasmic. A helical transmembrane segment spans residues 465–487 (SSDVLGSLNHEYVLVDITTSFTL). Residues 488-518 (LVGIFFPSVTGIMAGSNRSGDLKDAQKSIPI) lie on the Extracellular side of the membrane. Residues 519 to 545 (GTILAILTTSFVYLSNVVLFGACIEGV) form a helical membrane-spanning segment. The Cytoplasmic segment spans residues 546 to 568 (VLRDKFGDAVKGNLVVGTLSWPS). Helical transmembrane passes span 569 to 589 (PWVIVIGSFFSTCGAGLQSLT) and 590 to 612 (GAPRLLQAIAKDNIIPFLRVFGH). Ile603 lines the chloride pocket. The Cytoplasmic portion of the chain corresponds to 613–629 (SKANGEPTWALLLTAAI). 2 helical membrane passes run 630–649 (AELGILIASLDLVAPILSMF) and 650–665 (FLMCYLFVNLACALQT). Residues 666-1150 (LLRTPNWRPR…GGSEVITIYS (485 aa)) are Cytoplasmic-facing. Residues 682 to 691 (ALSFMGMSIC) form a scissor helix region. Position 736 is a phosphoserine (Ser736). Phosphothreonine is present on Thr778. Ser981 is subject to Phosphoserine. At Thr991 the chain carries Phosphothreonine; by OXSR1 and STK39. 3 positions are modified to phosphoserine: Ser1023, Ser1029, and Ser1032. At Thr1048 the chain carries Phosphothreonine; by OXSR1 and STK39. Tyr1121 bears the Phosphotyrosine mark. An interaction with CKB region spans residues 1133–1150 (ERVLLVRGGGSEVITIYS).

It belongs to the SLC12A transporter family. K/Cl co-transporter subfamily. As to quaternary structure, homodimer; adopts a domain-swap conformation at the scissor helices connecting the transmembrane domain and C-terminal domain. Heterodimer with K-Cl cotransporter SLC12A5. Interacts (via C-terminus) with CKB; the interaction may be required for potassium-chloride cotransport activity. In terms of processing, phosphorylated, phosphorylation regulates transporter activity. Phosphorylated at Thr-991 and Thr-1048 by OXSR1/OSR1 and STK39/SPAK downstream of WNK kinases (WNK1, WNK2, WNK3 or WNK4), inhibiting the potassium-chloride cotransport activity. N-glycosylated. In terms of tissue distribution, expressed in brain (at protein level). Highly expressed in heart, brain and kidney. Detected at lower levels in skeletal muscle, placenta, lung and pancreas. Detected in umbilical vein endothelial cells. As to expression, more abundant in kidney. Testis specific.

It localises to the cell membrane. The protein localises to the basolateral cell membrane. The enzyme catalyses K(+)(in) + chloride(in) = K(+)(out) + chloride(out). With respect to regulation, inhibited following phosphorylation by OXSR1/OSR1 and STK39/SPAK: phosphorylation takes place downstream of WNK kinases (WNK1, WNK2, WNK3 or WNK4) in response to hyperosmotic stress and subsequent cell shrinkage. Activated by N-ethylmaleimide (NEM). Inhibited by DIOA, bumetanide and furosemide. Its function is as follows. Mediates electroneutral potassium-chloride cotransport when activated by cell swelling. May contribute to cell volume homeostasis in single cells. In terms of biological role, mediates electroneutral potassium-chloride cotransport when activated by cell swelling. May contribute to cell volume homeostasis in single cells. Mediates electroneutral potassium-chloride cotransport when activated by cell swelling. May contribute to cell volume homeostasis in single cells. This chain is Solute carrier family 12 member 6, found in Homo sapiens (Human).